The chain runs to 869 residues: Probable beta-glucosidase F (869 aa).

A signal peptide spans 1 to 19 (MRVLSAIALVASLVPSALS). N-linked (GlcNAc...) asparagine glycans are attached at residues Asn-69, Asn-77, and Asn-261. Residue Asp-289 is part of the active site. N-linked (GlcNAc...) asparagine glycosylation is found at Asn-332, Asn-364, Asn-399, Asn-425, and Asn-478. The disordered stretch occupies residues 678-698 (AYPPTRPPKGPTPTYPTTIPN). Over residues 681–691 (PTRPPKGPTPT) the composition is skewed to pro residues. N-linked (GlcNAc...) asparagine glycosylation is present at Asn-728.

It belongs to the glycosyl hydrolase 3 family.

It is found in the secreted. The enzyme catalyses Hydrolysis of terminal, non-reducing beta-D-glucosyl residues with release of beta-D-glucose.. Its pathway is glycan metabolism; cellulose degradation. In terms of biological role, beta-glucosidases are one of a number of cellulolytic enzymes involved in the degradation of cellulosic biomass. Catalyzes the last step releasing glucose from the inhibitory cellobiose. The protein is Probable beta-glucosidase F (bglF) of Neosartorya fischeri (strain ATCC 1020 / DSM 3700 / CBS 544.65 / FGSC A1164 / JCM 1740 / NRRL 181 / WB 181) (Aspergillus fischerianus).